A 108-amino-acid polypeptide reads, in one-letter code: MKYIIFLFRAIWLALSLLILFFSMHRLSLLDSTRDVSELISLMSYGMMVICFPTGIVFFIALIFIGTVSDIIGVRIDSKYIMAIIIWLYFLSGGYIQWFVLSKRIINK.

3 helical membrane-spanning segments follow: residues 4–24 (IIFL…FFSM), 46–66 (GMMV…IFIG), and 81–101 (IMAI…WFVL).

The protein localises to the cell membrane. This is an uncharacterized protein from Escherichia coli O157:H7.